Consider the following 273-residue polypeptide: Proteasome subunit beta type-10 (273 aa).

The residue at position 1 (Met1) is an N-acetylmethionine. Residues 1–39 (MLKQAVEPTGGFSFENCQRNASLEHVLPGLRVPHARKTG) constitute a propeptide, removed in mature form. Thr40 serves as the catalytic Nucleophile.

This sequence belongs to the peptidase T1B family. The 26S proteasome consists of a 20S proteasome core and two 19S regulatory subunits. The 20S proteasome core is composed of 28 subunits that are arranged in four stacked rings, resulting in a barrel-shaped structure. The two end rings are each formed by seven alpha subunits, and the two central rings are each formed by seven beta subunits. The catalytic chamber with the active sites is on the inside of the barrel. Component of the immunoproteasome, where it displaces the equivalent housekeeping subunit PSMB7. Component of the spermatoproteasome, a form of the proteasome specifically found in testis. Autocleaved. The resulting N-terminal Thr residue of the mature subunit is responsible for the nucleophile proteolytic activity. As to expression, detected in liver (at protein level).

Its subcellular location is the cytoplasm. It is found in the nucleus. It carries out the reaction Cleavage of peptide bonds with very broad specificity.. In terms of biological role, the proteasome is a multicatalytic proteinase complex which is characterized by its ability to cleave peptides with Arg, Phe, Tyr, Leu, and Glu adjacent to the leaving group at neutral or slightly basic pH. The proteasome has an ATP-dependent proteolytic activity. This subunit is involved in antigen processing to generate class I binding peptides. Plays a role in determining the T-cell repertoire for an antiviral T-cell response. This is Proteasome subunit beta type-10 (Psmb10) from Mus musculus (Mouse).